The sequence spans 334 residues: Heat-inducible transcription repressor HrcA (334 aa).

Belongs to the HrcA family.

Functionally, negative regulator of class I heat shock genes (grpE-dnaK-dnaJ and groELS operons). Prevents heat-shock induction of these operons. This chain is Heat-inducible transcription repressor HrcA, found in Albidiferax ferrireducens (strain ATCC BAA-621 / DSM 15236 / T118) (Rhodoferax ferrireducens).